The following is a 121-amino-acid chain: Large ribosomal subunit protein uL18 (121 aa).

The protein belongs to the universal ribosomal protein uL18 family. In terms of assembly, part of the 50S ribosomal subunit; part of the 5S rRNA/L5/L18/L25 subcomplex. Contacts the 5S and 23S rRNAs.

This is one of the proteins that bind and probably mediate the attachment of the 5S RNA into the large ribosomal subunit, where it forms part of the central protuberance. This Mesomycoplasma hyopneumoniae (strain 232) (Mycoplasma hyopneumoniae) protein is Large ribosomal subunit protein uL18.